A 323-amino-acid polypeptide reads, in one-letter code: Mitochondrial glutamate carrier 1 (323 aa).

Solcar repeat units follow at residues 6 to 93, 101 to 214, and 223 to 312; these read ISLP…FRHQ, LTLP…LNQL, and SPFY…GIAE. Transmembrane regions (helical) follow at residues 12–32, 62–82, 107–127, 189–209, 223–243, and 292–312; these read LINGGIAGLIGVTCVFPIDLA, YFGMYRGAAVNLTLVTPEKAI, MLAGCGAGTCQVIVTTPMEML, GLGATLLRDVPFSIVYFPLFA, SPFYVSFLAGCVAGSAAAVAV, and ALVIAPLFGIAQVVYFLGIAE.

This sequence belongs to the mitochondrial carrier (TC 2.A.29) family. Detected in insulin-secreting beta-cells and pancreatic islets (at the protein level).

Its subcellular location is the mitochondrion inner membrane. It carries out the reaction L-glutamate(in) + H(+)(in) = L-glutamate(out) + H(+)(out). In terms of biological role, mitochondrial glutamate/H(+) symporter. Responsible for the transport of glutamate from the cytosol into the mitochondrial matrix with the concomitant import of a proton. Plays a role in the control of glucose-stimulated insulin secretion. The chain is Mitochondrial glutamate carrier 1 from Rattus norvegicus (Rat).